Consider the following 359-residue polypeptide: Nicotinate-nucleotide--dimethylbenzimidazole phosphoribosyltransferase (359 aa).

Residue glutamate 318 is the Proton acceptor of the active site.

The protein belongs to the CobT family. As to quaternary structure, homodimer.

It catalyses the reaction 5,6-dimethylbenzimidazole + nicotinate beta-D-ribonucleotide = alpha-ribazole 5'-phosphate + nicotinate + H(+). It functions in the pathway nucleoside biosynthesis; alpha-ribazole biosynthesis; alpha-ribazole from 5,6-dimethylbenzimidazole: step 1/2. Catalyzes the synthesis of alpha-ribazole-5'-phosphate from nicotinate mononucleotide (NAMN) and 5,6-dimethylbenzimidazole (DMB). The sequence is that of Nicotinate-nucleotide--dimethylbenzimidazole phosphoribosyltransferase from Escherichia coli (strain UTI89 / UPEC).